An 880-amino-acid chain; its full sequence is uncharacterized protein (880 aa).

Disordered stretches follow at residues 101 to 149 (KPIP…LRSE), 191 to 224 (PETS…ISTH), 240 to 273 (TTTT…PILK), 294 to 350 (NSNS…STTS), 425 to 446 (QPDS…ESQP), 470 to 508 (STST…SSSS), 536 to 561 (MESS…NDNS), 580 to 613 (APQS…NDDE), 682 to 713 (NTNT…NINN), and 844 to 880 (NSSG…KSEI). A coiled-coil region spans residues 113–147 (ISIKEKEKEKEKEKEKEKEKEKEKEKEMKSTINLR). The span at 115 to 149 (IKEKEKEKEKEKEKEKEKEKEKEKEMKSTINLRSE) shows a compositional bias: basic and acidic residues. Low complexity-rich tracts occupy residues 193-223 (TSTP…SIST) and 240-256 (TTTT…PSSS). Over residues 257–271 (IAGITNPTSRSSSPI) the composition is skewed to polar residues. Positions 294–332 (NSNSSSGGGNNNNKSISTPSSPIISRPITNKINNNNNNN) are enriched in low complexity. Over residues 333-342 (QPQLHYNQPQ) the composition is skewed to polar residues. Residues 536-548 (MESSTTTTLLSEN) show a composition bias toward low complexity. Acidic residues predominate over residues 589 to 613 (QPEDDPFFDFEDLSDDDDSNDNDDE). The span at 844–864 (NSSGSGNNSNDNSGSSSPSSS) shows a compositional bias: low complexity. The span at 865–880 (KTNTLNQQSICIKSEI) shows a compositional bias: polar residues.

This is an uncharacterized protein from Dictyostelium discoideum (Social amoeba).